The sequence spans 201 residues: FMN-dependent NADH:quinone oxidoreductase (201 aa).

FMN contacts are provided by residues Ser-10, 16-18 (SQS), 96-99 (MYNF), and 140-143 (SRGG).

It belongs to the azoreductase type 1 family. In terms of assembly, homodimer. FMN is required as a cofactor.

It carries out the reaction 2 a quinone + NADH + H(+) = 2 a 1,4-benzosemiquinone + NAD(+). It catalyses the reaction N,N-dimethyl-1,4-phenylenediamine + anthranilate + 2 NAD(+) = 2-(4-dimethylaminophenyl)diazenylbenzoate + 2 NADH + 2 H(+). Functionally, quinone reductase that provides resistance to thiol-specific stress caused by electrophilic quinones. In terms of biological role, also exhibits azoreductase activity. Catalyzes the reductive cleavage of the azo bond in aromatic azo compounds to the corresponding amines. In Cronobacter sakazakii (strain ATCC BAA-894) (Enterobacter sakazakii), this protein is FMN-dependent NADH:quinone oxidoreductase.